We begin with the raw amino-acid sequence, 515 residues long: Glucose-6-phosphate 1-dehydrogenase (515 aa).

N-acetylalanine is present on alanine 2. Serine 8 carries the post-translational modification Phosphoserine. Threonine 10 is subject to Phosphothreonine. 38 to 45 (GASGDLAK) contacts NADP(+). Lysine 89 is modified (N6-acetyllysine). 2 residues coordinate NADP(+): tyrosine 147 and lysine 171. D-glucose 6-phosphate is bound by residues lysine 171, 201 to 205 (HYLGK), glutamate 239, and glutamate 258. An N6-(2-hydroxyisobutyryl)lysine; alternate modification is found at lysine 171. The residue at position 171 (lysine 171) is an N6-acetyllysine; alternate. Arginine 357 contacts NADP(+). Positions 360 and 365 each coordinate D-glucose 6-phosphate. NADP(+) is bound by residues lysine 366, arginine 370, and arginine 393. A D-glucose 6-phosphate-binding site is contributed by glutamine 395. NADP(+)-binding positions include 401 to 403 (YTK) and 421 to 423 (DLT). Position 403 is an N6-acetyllysine (lysine 403). Lysine 432 carries the N6-acetyllysine modification. Arginine 487 is an NADP(+) binding site. Lysine 497 carries the N6-acetyllysine modification. Positions 503 and 509 each coordinate NADP(+). Tyrosine 503 is modified (phosphotyrosine).

It belongs to the glucose-6-phosphate dehydrogenase family. As to quaternary structure, homotetramer; dimer of dimers. Interacts with SIRT2; the interaction is enhanced by H(2)O(2) treatment. Forms a ternary complex with ALDOB and TP53; this interaction is direct. ALDOB stabilizes the complex inhibiting G6PD activity and keeping oxidative pentose phosphate metabolism in check. In terms of processing, acetylated by ELP3 at Lys-403; acetylation inhibits its homodimerization and enzyme activity. Deacetylated by SIRT2 at Lys-403; deacetylation stimulates its enzyme activity.

It localises to the cytoplasm. Its subcellular location is the cytosol. It is found in the membrane. The enzyme catalyses D-glucose 6-phosphate + NADP(+) = 6-phospho-D-glucono-1,5-lactone + NADPH + H(+). The protein operates within carbohydrate degradation; pentose phosphate pathway; D-ribulose 5-phosphate from D-glucose 6-phosphate (oxidative stage): step 1/3. Functionally, cytosolic glucose-6-phosphate dehydrogenase that catalyzes the first and rate-limiting step of the oxidative branch within the pentose phosphate pathway/shunt, an alternative route to glycolysis for the dissimilation of carbohydrates and a major source of reducing power and metabolic intermediates for fatty acid and nucleic acid biosynthetic processes. The protein is Glucose-6-phosphate 1-dehydrogenase (G6PD) of Bos indicus (Zebu).